The following is a 259-amino-acid chain: Thiazole synthase (259 aa).

Catalysis depends on Lys99, which acts as the Schiff-base intermediate with DXP. 1-deoxy-D-xylulose 5-phosphate-binding positions include Gly161, 187-188 (AG), and 209-210 (NT).

This sequence belongs to the ThiG family. Homotetramer. Forms heterodimers with either ThiH or ThiS.

It is found in the cytoplasm. The enzyme catalyses [ThiS sulfur-carrier protein]-C-terminal-Gly-aminoethanethioate + 2-iminoacetate + 1-deoxy-D-xylulose 5-phosphate = [ThiS sulfur-carrier protein]-C-terminal Gly-Gly + 2-[(2R,5Z)-2-carboxy-4-methylthiazol-5(2H)-ylidene]ethyl phosphate + 2 H2O + H(+). The protein operates within cofactor biosynthesis; thiamine diphosphate biosynthesis. Its function is as follows. Catalyzes the rearrangement of 1-deoxy-D-xylulose 5-phosphate (DXP) to produce the thiazole phosphate moiety of thiamine. Sulfur is provided by the thiocarboxylate moiety of the carrier protein ThiS. In vitro, sulfur can be provided by H(2)S. This Nitratiruptor sp. (strain SB155-2) protein is Thiazole synthase.